A 443-amino-acid polypeptide reads, in one-letter code: Probable nitrate/nitrite antiporter NarK1 (443 aa).

The next 12 membrane-spanning stretches (helical) occupy residues 23 to 43 (TLAF…GVPI), 56 to 76 (WISA…GILA), 79 to 99 (YGGR…AYLV), 108 to 128 (LLLY…GIAW), 142 to 164 (LGVF…ALIA), 182 to 202 (FIPF…WFGT), 230 to 250 (FSLY…WLPK), 255 to 275 (VFGL…FPAS), 298 to 318 (FGII…IVLY), 329 to 349 (FTMG…GMGI), 368 to 388 (AVGG…PPLF), and 401 to 421 (TFFV…LTVL).

Belongs to the major facilitator superfamily. Nitrate/nitrite porter (TC 2.A.1.8) family.

It localises to the cell membrane. The catalysed reaction is nitrate(in) + nitrite(out) = nitrate(out) + nitrite(in). In terms of biological role, probable nitrate/nitrite antiporter that may be involved in nitrate import and nitrite export during anaerobic growth. This Thermus thermophilus protein is Probable nitrate/nitrite antiporter NarK1.